The sequence spans 261 residues: MIRTSSHVLNVQENIMTSNCASSPYSCEATSACAEAQQVMIDNFVFFHMYNADIQIDAKLQCGVRSAAFAMIDDKHLEMYKHRIENKFFYYYDQCADIAKPDRLPDDDGACCHHFIFDAQRIIQCIKEIESAYGVRDRGNVIVFYPYLKQLRDALKLIKNSFACCFKIINSMQMYVNELISNCLLFIEKLETINKTVKVMNLFVDNLVLYECNVCKEISTDERFLKPKECCEYAICNACCVNMWKTATTHAKCPACRTSYK.

The RING-type zinc finger occupies 212–257; the sequence is CNVCKEISTDERFLKPKECCEYAICNACCVNMWKTATTHAKCPACR.

Interacts with proteins C42 and FP25. Interacts with host beta-tubulin. Interacts with Ac66 and vUb.

It is found in the host nucleus. The protein localises to the host cytoplasm. Its subcellular location is the virion. In terms of biological role, putative viral E3 ligase that plays an essential regulatory role in both viral DNA replication and transcriptional transactivation. The role in transcription has been shown to include activation of gene expression from early viral promoters. Also promotes the efficient egress of nucleocapsids from the host nucleus. May act as an E3 ligase that promotes ubiquitination of nucleocapsids proteins by vUbi and subsequent viral egress for the host nucleus. In Lepidoptera (butterflies and moths), this protein is Immediate-early protein IE-0 (IE0).